Reading from the N-terminus, the 316-residue chain is L-lactate dehydrogenase (316 aa).

NAD(+)-binding positions include 13–15 (GMI), 34–36 (FDI), Tyr67, and 79–83 (TAGFT). Arg95 contributes to the substrate binding site. Residues 125–127 (VTN), Leu150, and Leu154 each bind NAD(+). Substrate is bound by residues Arg158 and His182. NAD(+) is bound at residue His182. Residue His182 is the Proton acceptor of the active site.

This sequence belongs to the LDH/MDH superfamily. LDH family. In terms of assembly, homotetramer.

It catalyses the reaction (S)-lactate + NAD(+) = pyruvate + NADH + H(+). The protein operates within fermentation; pyruvate fermentation to lactate; (S)-lactate from pyruvate: step 1/1. This Plasmodium berghei protein is L-lactate dehydrogenase.